Here is a 350-residue protein sequence, read N- to C-terminus: Phosphotriesterase-related protein (350 aa).

A divalent metal cation-binding residues include H22, H24, E169, H201, H230, and D298.

The protein belongs to the metallo-dependent hydrolases superfamily. Phosphotriesterase family. A divalent metal cation is required as a cofactor.

This chain is Phosphotriesterase-related protein, found in Drosophila erecta (Fruit fly).